A 625-amino-acid polypeptide reads, in one-letter code: MARTAPAASFESLESDLDQKFAYPASSKTYITGSRPDIRVPLRTILQTATRTEKGEMANPPIPVYDTSGPYSDPDVHIDLKAGLPPVRAKWIEERNDTEVLTGLSSEYGLARANDPATAHLRFAQLTNPRRAKAGANVSQMHYARKGIITPEMEYVALRESLNLQALYDKPEYKALLRQHPGNALGAALPLRPEDMTPEFVRREVAAGRAIIPANINHTELEPMAIGRNFRVKINGNLGNSAVTSSLAEEVEKMVWSIRWGADTIMDLSTGKHIHETREWILRNSPVPIGTVPIYQALDKTGGIAEDLTWEMFRDTLIEQAEQGVDYFTIHAGVLLRYVPMTADRVTGIVSRGGSIMAKWCLAHHKENFLYTHFDEICEIMKAYDVSFSLGDGLRPGCIADSNDDAQFGELRTLGELTAKAWEHDVQVMIEGPGHVPLQRIQANMDEELKHCYEAPFYTLGPLVTDIAPGYDHITSGIGAANIGWMGTAMLCYVTPKEHLGLPDKEDVREGIITYKIAAHAADLAKGWPGAQLRDNALSKARFEFRWEDQFNLGLDPERARSFHDATLPAEGAKIAHFCSMCGPKFCSMKITQEVRDYAASLPEAERGMQEKSIEFVKTGSKIYS.

Residues Asn-237, Met-266, Tyr-295, His-331, 351-353 (SRG), 392-395 (DGLR), and Glu-431 contribute to the substrate site. His-435 serves as a coordination point for Zn(2+). Tyr-458 provides a ligand contact to substrate. His-499 serves as a coordination point for Zn(2+). [4Fe-4S] cluster is bound by residues Cys-579, Cys-582, and Cys-587.

The protein belongs to the ThiC family. In terms of assembly, homodimer. [4Fe-4S] cluster is required as a cofactor.

The catalysed reaction is 5-amino-1-(5-phospho-beta-D-ribosyl)imidazole + S-adenosyl-L-methionine = 4-amino-2-methyl-5-(phosphooxymethyl)pyrimidine + CO + 5'-deoxyadenosine + formate + L-methionine + 3 H(+). The protein operates within cofactor biosynthesis; thiamine diphosphate biosynthesis. Catalyzes the synthesis of the hydroxymethylpyrimidine phosphate (HMP-P) moiety of thiamine from aminoimidazole ribotide (AIR) in a radical S-adenosyl-L-methionine (SAM)-dependent reaction. In Cupriavidus metallidurans (strain ATCC 43123 / DSM 2839 / NBRC 102507 / CH34) (Ralstonia metallidurans), this protein is Phosphomethylpyrimidine synthase.